The following is a 179-amino-acid chain: NADH-quinone oxidoreductase subunit B (179 aa).

Residues cysteine 52, cysteine 53, cysteine 117, and cysteine 147 each contribute to the [4Fe-4S] cluster site.

Belongs to the complex I 20 kDa subunit family. In terms of assembly, NDH-1 is composed of 14 different subunits. Subunits NuoB, C, D, E, F, and G constitute the peripheral sector of the complex. [4Fe-4S] cluster is required as a cofactor.

The protein localises to the cell inner membrane. The catalysed reaction is a quinone + NADH + 5 H(+)(in) = a quinol + NAD(+) + 4 H(+)(out). Functionally, NDH-1 shuttles electrons from NADH, via FMN and iron-sulfur (Fe-S) centers, to quinones in the respiratory chain. The immediate electron acceptor for the enzyme in this species is believed to be ubiquinone. Couples the redox reaction to proton translocation (for every two electrons transferred, four hydrogen ions are translocated across the cytoplasmic membrane), and thus conserves the redox energy in a proton gradient. The protein is NADH-quinone oxidoreductase subunit B of Ehrlichia chaffeensis (strain ATCC CRL-10679 / Arkansas).